A 376-amino-acid chain; its full sequence is Queuine tRNA-ribosyltransferase (376 aa).

D90 functions as the Proton acceptor in the catalytic mechanism. Substrate contacts are provided by residues 90 to 94 (DSGGF), D144, Q193, and G220. Residues 251–257 (GVGTPED) form an RNA binding region. Catalysis depends on D270, which acts as the Nucleophile. The RNA binding; important for wobble base 34 recognition stretch occupies residues 275–279 (TRNAR). Residues C308, C310, C313, and H339 each coordinate Zn(2+).

It belongs to the queuine tRNA-ribosyltransferase family. In terms of assembly, homodimer. Within each dimer, one monomer is responsible for RNA recognition and catalysis, while the other monomer binds to the replacement base PreQ1. Requires Zn(2+) as cofactor.

The catalysed reaction is 7-aminomethyl-7-carbaguanine + guanosine(34) in tRNA = 7-aminomethyl-7-carbaguanosine(34) in tRNA + guanine. Its pathway is tRNA modification; tRNA-queuosine biosynthesis. Catalyzes the base-exchange of a guanine (G) residue with the queuine precursor 7-aminomethyl-7-deazaguanine (PreQ1) at position 34 (anticodon wobble position) in tRNAs with GU(N) anticodons (tRNA-Asp, -Asn, -His and -Tyr). Catalysis occurs through a double-displacement mechanism. The nucleophile active site attacks the C1' of nucleotide 34 to detach the guanine base from the RNA, forming a covalent enzyme-RNA intermediate. The proton acceptor active site deprotonates the incoming PreQ1, allowing a nucleophilic attack on the C1' of the ribose to form the product. After dissociation, two additional enzymatic reactions on the tRNA convert PreQ1 to queuine (Q), resulting in the hypermodified nucleoside queuosine (7-(((4,5-cis-dihydroxy-2-cyclopenten-1-yl)amino)methyl)-7-deazaguanosine). The sequence is that of Queuine tRNA-ribosyltransferase from Cupriavidus necator (strain ATCC 17699 / DSM 428 / KCTC 22496 / NCIMB 10442 / H16 / Stanier 337) (Ralstonia eutropha).